We begin with the raw amino-acid sequence, 382 residues long: V-type proton ATPase subunit C 1 (382 aa).

Threonine 2 bears the N-acetylthreonine mark.

The protein belongs to the V-ATPase C subunit family. In terms of assembly, V-ATPase is a heteromultimeric enzyme made up of two complexes: the ATP-hydrolytic V1 complex and the proton translocation V0 complex. The V1 complex consists of three catalytic AB heterodimers that form a heterohexamer, three peripheral stalks each consisting of EG heterodimers, one central rotor including subunits D and F, and the regulatory subunits C and H. The proton translocation complex V0 consists of the proton transport subunit a, a ring of proteolipid subunits c9c'', rotary subunit d, subunits e and f, and two accessory subunits.

Subunit of the V1 complex of vacuolar(H+)-ATPase (V-ATPase), a multisubunit enzyme composed of a peripheral complex (V1) that hydrolyzes ATP and a membrane integral complex (V0) that translocates protons. V-ATPase is responsible for acidifying and maintaining the pH of intracellular compartments and in some cell types, is targeted to the plasma membrane, where it is responsible for acidifying the extracellular environment. Subunit C is necessary for the assembly of the catalytic sector of the enzyme and is likely to have a specific function in its catalytic activity. This Xenopus tropicalis (Western clawed frog) protein is V-type proton ATPase subunit C 1 (atp6v1c1).